The chain runs to 211 residues: ATP phosphoribosyltransferase (211 aa).

The protein belongs to the ATP phosphoribosyltransferase family. Short subfamily. In terms of assembly, heteromultimer composed of HisG and HisZ subunits.

The protein localises to the cytoplasm. It carries out the reaction 1-(5-phospho-beta-D-ribosyl)-ATP + diphosphate = 5-phospho-alpha-D-ribose 1-diphosphate + ATP. The protein operates within amino-acid biosynthesis; L-histidine biosynthesis; L-histidine from 5-phospho-alpha-D-ribose 1-diphosphate: step 1/9. Its function is as follows. Catalyzes the condensation of ATP and 5-phosphoribose 1-diphosphate to form N'-(5'-phosphoribosyl)-ATP (PR-ATP). Has a crucial role in the pathway because the rate of histidine biosynthesis seems to be controlled primarily by regulation of HisG enzymatic activity. The polypeptide is ATP phosphoribosyltransferase (Bacillus cereus (strain ATCC 10987 / NRS 248)).